Consider the following 350-residue polypeptide: Protein disulfide isomerase Creld2 (350 aa).

An N-terminal signal peptide occupies residues 1–22 (MHLLLAAAFGLLLLLPPPGAVA). A CXXC motif is present at residues 29-32 (CQRC). 4 cysteine pairs are disulfide-bonded: C29/C32, C138/C152, C146/C164, and C166/C175. The EGF-like 1 domain maps to 134–176 (DCQECQGGSERPCSGNGYCSGDGSRQGDGSCQCHTGYKGPLCI). The stretch at 191 to 238 (HSICSACDESCKTCSGPSNKDCIQCEVGWARVEDACVDVDECAAETSP) is one FU 1 repeat. A glycan (N-linked (GlcNAc...) asparagine) is linked at N249. Residues 251–298 (SYTCEDCDSTCVGCTGKGPANCKECIAGYTKESGQCTDIDECSLEEKA) form an FU 2 repeat. The CXXC signature appears at 261 to 264 (CVGC). 4 disulfides stabilise this stretch: C261/C264, C292/C306, C299/C315, and C317/C328. One can recognise an EGF-like 2; calcium-binding domain in the interval 288–329 (DIDECSLEEKACKRKNENCYNVPGSFVCVCPEGFEETEDACV).

Belongs to the CRELD family. Interacts with CHRNA4. Component of a complex containing at least CRELD2, MANF, MATN3 and PDIA4. In terms of tissue distribution, expressed in chondrocytes (at protein level).

It localises to the endoplasmic reticulum. The catalysed reaction is Catalyzes the rearrangement of -S-S- bonds in proteins.. In terms of biological role, protein disulfide isomerase. Might play a role in the unfolded protein response. May regulate transport of alpha4-beta2 neuronal acetylcholine receptor. In Mus musculus (Mouse), this protein is Protein disulfide isomerase Creld2 (Creld2).